We begin with the raw amino-acid sequence, 557 residues long: Dihydroxy-acid dehydratase (557 aa).

Asp-78 provides a ligand contact to Mg(2+). Residue Cys-119 coordinates [2Fe-2S] cluster. The Mg(2+) site is built by Asp-120 and Lys-121. Residue Lys-121 is modified to N6-carboxylysine. Cys-192 lines the [2Fe-2S] cluster pocket. Glu-443 is a Mg(2+) binding site. Ser-469 serves as the catalytic Proton acceptor.

It belongs to the IlvD/Edd family. Homodimer. The cofactor is [2Fe-2S] cluster. Mg(2+) is required as a cofactor.

The catalysed reaction is (2R)-2,3-dihydroxy-3-methylbutanoate = 3-methyl-2-oxobutanoate + H2O. It catalyses the reaction (2R,3R)-2,3-dihydroxy-3-methylpentanoate = (S)-3-methyl-2-oxopentanoate + H2O. It functions in the pathway amino-acid biosynthesis; L-isoleucine biosynthesis; L-isoleucine from 2-oxobutanoate: step 3/4. It participates in amino-acid biosynthesis; L-valine biosynthesis; L-valine from pyruvate: step 3/4. Functions in the biosynthesis of branched-chain amino acids. Catalyzes the dehydration of (2R,3R)-2,3-dihydroxy-3-methylpentanoate (2,3-dihydroxy-3-methylvalerate) into 2-oxo-3-methylpentanoate (2-oxo-3-methylvalerate) and of (2R)-2,3-dihydroxy-3-methylbutanoate (2,3-dihydroxyisovalerate) into 2-oxo-3-methylbutanoate (2-oxoisovalerate), the penultimate precursor to L-isoleucine and L-valine, respectively. The sequence is that of Dihydroxy-acid dehydratase from Sulfurihydrogenibium sp. (strain YO3AOP1).